A 416-amino-acid polypeptide reads, in one-letter code: Tyrosine--tRNA ligase (416 aa).

Position 41 (tyrosine 41) interacts with L-tyrosine. A 'HIGH' region motif is present at residues 46–55 (ATASSLHAGH). Positions 175 and 179 each coordinate L-tyrosine. Positions 235-239 (KMGKT) match the 'KMSKS' region motif. An ATP-binding site is contributed by lysine 238. Positions 349–416 (LPVAKAFVDA…KKKHVLLKPV (68 aa)) constitute an S4 RNA-binding domain.

This sequence belongs to the class-I aminoacyl-tRNA synthetase family. TyrS type 1 subfamily. As to quaternary structure, homodimer.

It localises to the cytoplasm. The catalysed reaction is tRNA(Tyr) + L-tyrosine + ATP = L-tyrosyl-tRNA(Tyr) + AMP + diphosphate + H(+). Functionally, catalyzes the attachment of tyrosine to tRNA(Tyr) in a two-step reaction: tyrosine is first activated by ATP to form Tyr-AMP and then transferred to the acceptor end of tRNA(Tyr). The chain is Tyrosine--tRNA ligase from Xanthobacter autotrophicus (strain ATCC BAA-1158 / Py2).